A 387-amino-acid polypeptide reads, in one-letter code: uncharacterized protein (387 aa).

3 disordered regions span residues 1–126 (MDGR…GDDE), 138–169 (GNQGGLVPGLAPIPSENENGKNDIEKNNRNEE), and 275–298 (SSIFSDSQAVTTDDEGISSTAGNK). The segment covering 32-45 (SSDHRTSNSAESKK) has biased composition (basic and acidic residues). Polar residues-rich tracts occupy residues 49-63 (SGKSISDLGISNNDN) and 78-93 (DLSSRSTETSDNSKGT). Over residues 155–169 (ENGKNDIEKNNRNEE) the composition is skewed to basic and acidic residues. Polar residues predominate over residues 275 to 296 (SSIFSDSQAVTTDDEGISSTAG).

The protein belongs to the ThrE exporter (TC 2.A.79) family.

This is an uncharacterized protein from Saccharomyces cerevisiae (strain ATCC 204508 / S288c) (Baker's yeast).